We begin with the raw amino-acid sequence, 684 residues long: DNA helicase IV (684 aa).

The UvrD-like helicase ATP-binding domain maps to 195–505 (SPLNPAQARA…CDLDTTYRFN (311 aa)). Residues 216–223 (AGAGSGKT) and Arg-503 contribute to the ATP site.

Belongs to the helicase family. UvrD subfamily.

It catalyses the reaction Couples ATP hydrolysis with the unwinding of duplex DNA by translocating in the 3'-5' direction.. The enzyme catalyses ATP + H2O = ADP + phosphate + H(+). In terms of biological role, helicase IV catalyzes the unwinding of duplex DNA in the 3' to 5' direction with respect to the bound single strand in a reaction that is dependent upon the hydrolysis of ATP. The sequence is that of DNA helicase IV (helD) from Escherichia coli (strain K12).